The sequence spans 607 residues: Elongation factor 4 (607 aa).

The region spanning E11–T193 is the tr-type G domain. Residues D23–T28 and N140–D143 contribute to the GTP site.

The protein belongs to the TRAFAC class translation factor GTPase superfamily. Classic translation factor GTPase family. LepA subfamily.

The protein localises to the cell membrane. The catalysed reaction is GTP + H2O = GDP + phosphate + H(+). Its function is as follows. Required for accurate and efficient protein synthesis under certain stress conditions. May act as a fidelity factor of the translation reaction, by catalyzing a one-codon backward translocation of tRNAs on improperly translocated ribosomes. Back-translocation proceeds from a post-translocation (POST) complex to a pre-translocation (PRE) complex, thus giving elongation factor G a second chance to translocate the tRNAs correctly. Binds to ribosomes in a GTP-dependent manner. This Streptococcus gordonii (strain Challis / ATCC 35105 / BCRC 15272 / CH1 / DL1 / V288) protein is Elongation factor 4.